A 905-amino-acid polypeptide reads, in one-letter code: DNA mismatch repair protein MutS (905 aa).

The tract at residues Lys-272–Pro-292 is disordered. Gly-654 to Ser-661 provides a ligand contact to ATP.

It belongs to the DNA mismatch repair MutS family.

Functionally, this protein is involved in the repair of mismatches in DNA. It is possible that it carries out the mismatch recognition step. This protein has a weak ATPase activity. This Rhodopseudomonas palustris (strain BisB18) protein is DNA mismatch repair protein MutS.